The following is a 128-amino-acid chain: Large ribosomal subunit protein bL12 (128 aa).

Belongs to the bacterial ribosomal protein bL12 family. Homodimer. Part of the ribosomal stalk of the 50S ribosomal subunit. Forms a multimeric L10(L12)X complex, where L10 forms an elongated spine to which 2 to 4 L12 dimers bind in a sequential fashion. Binds GTP-bound translation factors.

Functionally, forms part of the ribosomal stalk which helps the ribosome interact with GTP-bound translation factors. Is thus essential for accurate translation. The polypeptide is Large ribosomal subunit protein bL12 (Thermosipho africanus (strain TCF52B)).